Here is a 447-residue protein sequence, read N- to C-terminus: Phosphoglucosamine mutase (447 aa).

The active-site Phosphoserine intermediate is the serine 102. Positions 102, 241, 243, and 245 each coordinate Mg(2+). Residue serine 102 is modified to Phosphoserine.

The protein belongs to the phosphohexose mutase family. The cofactor is Mg(2+). Activated by phosphorylation.

The catalysed reaction is alpha-D-glucosamine 1-phosphate = D-glucosamine 6-phosphate. Catalyzes the conversion of glucosamine-6-phosphate to glucosamine-1-phosphate. This Pseudomonas savastanoi pv. phaseolicola (strain 1448A / Race 6) (Pseudomonas syringae pv. phaseolicola (strain 1448A / Race 6)) protein is Phosphoglucosamine mutase.